Reading from the N-terminus, the 231-residue chain is Adenosine 5'-phosphosulfate reductase (231 aa).

Residues cysteine 118, cysteine 119, cysteine 201, and cysteine 204 each coordinate [4Fe-4S] cluster. Cysteine 227 serves as the catalytic Nucleophile; cysteine thiosulfonate intermediate.

It belongs to the PAPS reductase family. CysH subfamily. Requires [4Fe-4S] cluster as cofactor.

It localises to the cytoplasm. The catalysed reaction is [thioredoxin]-disulfide + sulfite + AMP + 2 H(+) = adenosine 5'-phosphosulfate + [thioredoxin]-dithiol. Its pathway is sulfur metabolism; hydrogen sulfide biosynthesis; sulfite from sulfate. Its function is as follows. Catalyzes the formation of sulfite from adenosine 5'-phosphosulfate (APS) using thioredoxin as an electron donor. In Halalkalibacterium halodurans (strain ATCC BAA-125 / DSM 18197 / FERM 7344 / JCM 9153 / C-125) (Bacillus halodurans), this protein is Adenosine 5'-phosphosulfate reductase.